The following is a 445-amino-acid chain: Anthranilate N-benzoyltransferase protein 1 (445 aa).

Active-site proton acceptor residues include H164 and D392.

Belongs to the plant acyltransferase family. In terms of processing, N-terminus is blocked.

The enzyme catalyses anthranilate + benzoyl-CoA = N-benzoylanthranilate + CoA. It participates in phytoalexin biosynthesis; methoxydianthramide B biosynthesis. Its function is as follows. Catalyzes the formation of N-benzoylanthranilate, in the course of methoxydianthramide B, a phytoalexin. Phytoalexins are produced in response to infection by parasites, and are essential for the expression of disease resistance. The protein is Anthranilate N-benzoyltransferase protein 1 (HCBT1) of Dianthus caryophyllus (Carnation).